The sequence spans 241 residues: 1-(5-phosphoribosyl)-5-[(5-phosphoribosylamino)methylideneamino] imidazole-4-carboxamide isomerase (241 aa).

Asp8 serves as the catalytic Proton acceptor. The Proton donor role is filled by Asp129.

It belongs to the HisA/HisF family.

It is found in the cytoplasm. It catalyses the reaction 1-(5-phospho-beta-D-ribosyl)-5-[(5-phospho-beta-D-ribosylamino)methylideneamino]imidazole-4-carboxamide = 5-[(5-phospho-1-deoxy-D-ribulos-1-ylimino)methylamino]-1-(5-phospho-beta-D-ribosyl)imidazole-4-carboxamide. The protein operates within amino-acid biosynthesis; L-histidine biosynthesis; L-histidine from 5-phospho-alpha-D-ribose 1-diphosphate: step 4/9. The chain is 1-(5-phosphoribosyl)-5-[(5-phosphoribosylamino)methylideneamino] imidazole-4-carboxamide isomerase from Chloroflexus aggregans (strain MD-66 / DSM 9485).